The chain runs to 576 residues: D-lactate dehydrogenase [cytochrome], mitochondrial (576 aa).

Residues 139–320 (EANQRPEIVL…TEATIKCHVR (182 aa)) enclose the FAD-binding PCMH-type domain.

This sequence belongs to the FAD-binding oxidoreductase/transferase type 4 family. FAD is required as a cofactor. Zn(2+) serves as cofactor.

Its subcellular location is the mitochondrion matrix. The catalysed reaction is (R)-lactate + 2 Fe(III)-[cytochrome c] = 2 Fe(II)-[cytochrome c] + pyruvate + 2 H(+). Catalyzes the stereospecific oxidation of D-lactate to pyruvate. This Kluyveromyces lactis (strain ATCC 8585 / CBS 2359 / DSM 70799 / NBRC 1267 / NRRL Y-1140 / WM37) (Yeast) protein is D-lactate dehydrogenase [cytochrome], mitochondrial (DLD1).